The chain runs to 743 residues: Conserved oligomeric Golgi complex subunit 8 (743 aa).

2 disordered regions span residues 549–672 and 704–743; these read EDGP…TEPE and TQDD…KKDD. 4 stretches are compositionally biased toward basic and acidic residues: residues 563 to 581, 594 to 621, 633 to 647, and 654 to 664; these read ESVK…HGTD, PVKE…HETP, SEAK…HLEL, and QEIREQEHKEV. Residues 704–726 are compositionally biased toward acidic residues; that stretch reads TQDDPIEEEEGWGWGDDDGEEQE. Basic and acidic residues predominate over residues 727-743; sequence ISSKEVESPKEKCKKDD.

This sequence belongs to the COG8 family. In terms of assembly, component of the conserved oligomeric Golgi complex which is composed of eight different subunits and is required for normal Golgi morphology and localization.

The protein resides in the golgi apparatus membrane. Required for normal Golgi function. The polypeptide is Conserved oligomeric Golgi complex subunit 8 (cogc-8) (Caenorhabditis elegans).